The chain runs to 117 residues: Non-specific lipid-transfer protein 2 (117 aa).

Positions 1–25 (MAGLMKLACLVLACMIVAGPITSNA) are cleaved as a signal peptide. 4 disulfides stabilise this stretch: Cys29-Cys76, Cys39-Cys53, Cys54-Cys99, and Cys74-Cys113.

It belongs to the plant LTP family.

Plant non-specific lipid-transfer proteins transfer phospholipids as well as galactolipids across membranes. May play a role in wax or cutin deposition in the cell walls of expanding epidermal cells and certain secretory tissues. The polypeptide is Non-specific lipid-transfer protein 2 (LTP2) (Brassica napus (Rape)).